The chain runs to 225 residues: UPF0173 metal-dependent hydrolase PH1671 (225 aa).

Belongs to the UPF0173 family.

This is UPF0173 metal-dependent hydrolase PH1671 from Pyrococcus horikoshii (strain ATCC 700860 / DSM 12428 / JCM 9974 / NBRC 100139 / OT-3).